The primary structure comprises 164 residues: Ribosome-binding factor A (164 aa).

Belongs to the RbfA family. In terms of assembly, monomer. Binds 30S ribosomal subunits, but not 50S ribosomal subunits or 70S ribosomes.

It localises to the cytoplasm. One of several proteins that assist in the late maturation steps of the functional core of the 30S ribosomal subunit. Associates with free 30S ribosomal subunits (but not with 30S subunits that are part of 70S ribosomes or polysomes). Required for efficient processing of 16S rRNA. May interact with the 5'-terminal helix region of 16S rRNA. The sequence is that of Ribosome-binding factor A from Caulobacter sp. (strain K31).